The chain runs to 302 residues: Putative receptor-like protein 16 (302 aa).

3 LRR repeats span residues 1 to 19 (MNLT…LGNM), 20 to 43 (EMIE…FLKG), and 45 to 70 (DSLI…NFFS). An LRR 4; degenerate repeat occupies 72-91 (LELSMDNNLFTGKIGRGLQS). LRR repeat units follow at residues 92-115 (LRSL…WFDQ), 116-140 (LQDL…LFNM), 142-164 (SLQL…ISGY), 166-188 (ALKV…LLGK), 190-211 (IIVL…INTQ), 213-234 (IRIL…LCAV), and 235-258 (RSIH…LRNA).

The protein belongs to the RLP family.

In Arabidopsis thaliana (Mouse-ear cress), this protein is Putative receptor-like protein 16.